The following is a 175-amino-acid chain: MGKMFSKIFGNKEMRILMRGLDAAGKTTILYKLKLGQSVTTIPTVGFNVETVTYKNVKFNVWDVGGQDKIRPLWRHYYTGTQGLIFVVDCPDRDRIDEARQELHRIINDREMRDAIILIFANKQDLPDAMKPHEIQEKLGLTRIRDRNWYVQPSCAASGDGLYEGLTWLTSNYKS.

Glycine 2 carries N-myristoyl glycine lipidation. Lysine 3 carries N6-myristoyl lysine lipidation. Residues alanine 23–threonine 28, threonine 41–threonine 44, aspartate 63–glutamine 67, asparagine 122–aspartate 125, and cysteine 155–alanine 156 each bind GTP.

The protein belongs to the small GTPase superfamily. Arf family.

It localises to the cytoplasm. The protein resides in the cytosol. The protein localises to the cell membrane. Its subcellular location is the endosome membrane. It is found in the recycling endosome membrane. It localises to the cell projection. The protein resides in the filopodium membrane. The protein localises to the ruffle. Its subcellular location is the cleavage furrow. It is found in the midbody. It localises to the midbody ring. The protein resides in the golgi apparatus. It catalyses the reaction GTP + H2O = GDP + phosphate + H(+). Its function is as follows. GTP-binding protein involved in protein trafficking; regulates endocytic recycling and cytoskeleton remodeling. May modulate vesicle budding and uncoating within the Golgi apparatus. May contribute to the regulation of dendritic branching, filopodia extension and dendritic spine development. The protein is ADP-ribosylation factor 6 (arf6) of Xenopus laevis (African clawed frog).